Consider the following 167-residue polypeptide: uncharacterized protein (167 aa).

Transmembrane regions (helical) follow at residues Lys21–Pro41 and Met87–Gly107. Basic and acidic residues predominate over residues Arg136 to Thr159. The disordered stretch occupies residues Arg136–Leu167.

Its subcellular location is the membrane. This is an uncharacterized protein from Schizosaccharomyces pombe (strain 972 / ATCC 24843) (Fission yeast).